The sequence spans 585 residues: Arginine--tRNA ligase (585 aa).

The 'HIGH' region signature appears at 131–141; it reads ANPTGPMHVGH.

The protein belongs to the class-I aminoacyl-tRNA synthetase family. Monomer.

The protein localises to the cytoplasm. The enzyme catalyses tRNA(Arg) + L-arginine + ATP = L-arginyl-tRNA(Arg) + AMP + diphosphate. The polypeptide is Arginine--tRNA ligase (Brucella suis (strain ATCC 23445 / NCTC 10510)).